A 241-amino-acid chain; its full sequence is Small ribosomal subunit protein uS3 (241 aa).

In terms of domain architecture, KH type-2 spans 39–107; it reads MRKFVMDELK…ETHLNIVEVR (69 aa). The segment at 214 to 241 is disordered; the sequence is ASERRALEGDAQGPASRDRDRDRRRDNA. The span at 229 to 241 shows a compositional bias: basic and acidic residues; it reads SRDRDRDRRRDNA.

This sequence belongs to the universal ribosomal protein uS3 family. Part of the 30S ribosomal subunit. Forms a tight complex with proteins S10 and S14.

Functionally, binds the lower part of the 30S subunit head. Binds mRNA in the 70S ribosome, positioning it for translation. In Rhizobium rhizogenes (strain K84 / ATCC BAA-868) (Agrobacterium radiobacter), this protein is Small ribosomal subunit protein uS3.